The sequence spans 90 residues: Small ribosomal subunit protein bS16 (90 aa).

It belongs to the bacterial ribosomal protein bS16 family.

In Streptococcus thermophilus (strain CNRZ 1066), this protein is Small ribosomal subunit protein bS16.